Reading from the N-terminus, the 128-residue chain is Aspartate 1-decarboxylase (128 aa).

The active-site Schiff-base intermediate with substrate; via pyruvic acid is Ser-25. The residue at position 25 (Ser-25) is a Pyruvic acid (Ser). Residue Thr-57 participates in substrate binding. The active-site Proton donor is Tyr-58. A substrate-binding site is contributed by 73–75 (GSA).

Belongs to the PanD family. As to quaternary structure, heterooctamer of four alpha and four beta subunits. It depends on pyruvate as a cofactor. Is synthesized initially as an inactive proenzyme, which is activated by self-cleavage at a specific serine bond to produce a beta-subunit with a hydroxyl group at its C-terminus and an alpha-subunit with a pyruvoyl group at its N-terminus.

The protein resides in the cytoplasm. It carries out the reaction L-aspartate + H(+) = beta-alanine + CO2. The protein operates within cofactor biosynthesis; (R)-pantothenate biosynthesis; beta-alanine from L-aspartate: step 1/1. Catalyzes the pyruvoyl-dependent decarboxylation of aspartate to produce beta-alanine. This Paraburkholderia phymatum (strain DSM 17167 / CIP 108236 / LMG 21445 / STM815) (Burkholderia phymatum) protein is Aspartate 1-decarboxylase.